A 486-amino-acid chain; its full sequence is Monocarboxylate transporter 12 (486 aa).

Topologically, residues 1–9 (MTKITRVSL) are cytoplasmic. Transmembrane regions (helical) follow at residues 10–30 (ASPP…LVTI), 58–78 (AWIH…GSVV), 86–106 (AGIM…SFAT), 115–135 (LGVL…AMVG), 148–168 (IAMS…QLLI), 177–197 (LLIL…MRPI), 253–273 (FVVL…LFVY), 289–309 (AFLM…FGWL), 320–340 (YVCY…LPML), 353–373 (FGYF…EIVG), 383–403 (VVYF…GWLV), and 410–430 (TAAF…LGFV). The Cytoplasmic segment spans residues 431-486 (RIVKRMKRTQVPFPVKDSDPKLQLWTNGSVAYSVARELDQKDEEPLPKARSGCNLT).

It belongs to the major facilitator superfamily. Monocarboxylate porter (TC 2.A.1.13) family. In terms of assembly, interacts with isoform 2 of BSG; this interaction is required for its localization to the plasma membrane. Highly expressed in the lung, liver, kidney, and pancreas. Expressed in eye lens.

The protein resides in the cell membrane. Its subcellular location is the basolateral cell membrane. The catalysed reaction is creatine(in) = creatine(out). The enzyme catalyses guanidinoacetate(in) = guanidinoacetate(out). With respect to regulation, creatine uptake is inhibited by carbonyl cyanide 3-chlorophenylhydrazone (CCCP) and by valinomycin. Its function is as follows. Functions as a transporter for creatine and as well for its precursor guanidinoacetate. Transport of creatine and GAA is independent of resting membrane potential and extracellular Na(+), Cl(-), or pH. Contributes to the process of creatine biosynthesis and distribution. The chain is Monocarboxylate transporter 12 from Mus musculus (Mouse).